A 270-amino-acid polypeptide reads, in one-letter code: Chymotrypsin-like elastase family member 3B (270 aa).

The or 16 signal peptide spans 1–15 (MMLRLLSSLLLVAVA). A propeptide spans 16–28 (SGYGPPSSRPSSR) (activation peptide). In terms of domain architecture, Peptidase S1 spans 29–268 (VVNGEDAVPY…FIDWIEETIA (240 aa)). A disulfide bridge links Cys58 with Cys74. Residue His73 is the Charge relay system of the active site. Asn114 carries an N-linked (GlcNAc...) asparagine glycan. Residues Cys117 and Cys120 are joined by a disulfide bond. Residue Asp123 is the Charge relay system of the active site. Disulfide bonds link Cys157–Cys223, Cys188–Cys204, and Cys213–Cys244. Residue Ser217 is the Charge relay system of the active site.

It belongs to the peptidase S1 family. Elastase subfamily. As to expression, pancreas. Not detectable in keratinocytes.

It catalyses the reaction Preferential cleavage: Ala-|-Xaa. Does not hydrolyze elastin.. In terms of biological role, efficient protease with alanine specificity but only little elastolytic activity. The polypeptide is Chymotrypsin-like elastase family member 3B (CELA3B) (Homo sapiens (Human)).